Consider the following 80-residue polypeptide: Defensin-like protein 51 (80 aa).

The signal sequence occupies residues 1–27; that stretch reads MGFTKILVTFFLVGLLVISSSPQNAIA. 4 cysteine pairs are disulfide-bonded: Cys39–Cys79, Cys43–Cys66, Cys52–Cys77, and Cys56–Cys78.

The protein belongs to the DEFL family.

The protein resides in the secreted. The protein is Defensin-like protein 51 (LCR48) of Arabidopsis thaliana (Mouse-ear cress).